Here is a 413-residue protein sequence, read N- to C-terminus: Precorrin-6Y C(5,15)-methyltransferase [decarboxylating] (413 aa).

This sequence belongs to the precorrin methyltransferase family.

The enzyme catalyses precorrin-6B + 2 S-adenosyl-L-methionine = precorrin-8X + 2 S-adenosyl-L-homocysteine + CO2 + 3 H(+). The protein operates within cofactor biosynthesis; adenosylcobalamin biosynthesis; cob(II)yrinate a,c-diamide from precorrin-2 (aerobic route): step 7/10. Its function is as follows. Catalyzes the methylation of both C-5 and C-15 in precorrin-6Y to form precorrin-8X. In Sinorhizobium sp, this protein is Precorrin-6Y C(5,15)-methyltransferase [decarboxylating] (cobL).